We begin with the raw amino-acid sequence, 433 residues long: Staphylopine synthase (433 aa).

NADP(+)-binding positions include 9 to 12 (TGPV), R33, 37 to 40 (SEKS), and D99. The active-site Proton donor/acceptor is H216.

It belongs to the staphylopine dehydrogenase family. As to quaternary structure, homodimer.

The enzyme catalyses staphylopine + NADP(+) + H2O = (2S)-2-amino-4-{[(1R)-1-carboxy-2-(1H-imidazol-4-yl)ethyl]amino}butanoate + pyruvate + NADPH + H(+). Catalyzes the NADPH-dependent reductive condensation of pyruvate to the intermediate formed by the adjacently encoded enzyme CntL, namely (2S)-2-amino-4-{[(1R)-1-carboxy-2-(1H-imidazol-4-yl)ethyl]amino}butanoate, leading to the production of staphylopine. This is the last step in the biosynthesis of the metallophore staphylopine, which is involved in the acquisition of nickel, cobalt, zinc, copper, and iron, and thus enables bacterial growth inside the host, where metal access is limited. Therefore, this enzyme probably contributes to staphylococcal virulence. Can use neither NADH nor alpha-ketoglutarate in place of NADPH and pyruvate, respectively. The chain is Staphylopine synthase from Staphylococcus aureus (strain Mu50 / ATCC 700699).